The chain runs to 131 residues: Ribosome-binding factor A (131 aa).

It belongs to the RbfA family. Monomer. Binds 30S ribosomal subunits, but not 50S ribosomal subunits or 70S ribosomes.

Its subcellular location is the cytoplasm. Functionally, one of several proteins that assist in the late maturation steps of the functional core of the 30S ribosomal subunit. Associates with free 30S ribosomal subunits (but not with 30S subunits that are part of 70S ribosomes or polysomes). Required for efficient processing of 16S rRNA. May interact with the 5'-terminal helix region of 16S rRNA. This is Ribosome-binding factor A from Protochlamydia amoebophila (strain UWE25).